The following is an 874-amino-acid chain: Envelope glycoprotein B (874 aa).

The first 25 residues, 1–25 (MGVGGGPRVVLCLWCVAALLCQGVA), serve as a signal peptide directing secretion. Topologically, residues 26–727 (QEVVAETTTP…SGVISFFKNP (702 aa)) are virion surface. 5 cysteine pairs are disulfide-bonded: Cys-59-Cys-523, Cys-77-Cys-479, Cys-149-Cys-214, Cys-306-Cys-353, and Cys-546-Cys-583. Residues 116 to 122 (IYKGWSE) form an involved in fusion and/or binding to host membrane region. Asn-171 carries an N-linked (GlcNAc...) asparagine; by host glycan. Residues 200-208 (RNLLWSYTT) are involved in fusion and/or binding to host membrane. N-linked (GlcNAc...) asparagine; by host glycans are attached at residues Asn-247, Asn-281, Asn-302, Asn-323, Asn-348, Asn-356, Asn-376, Asn-409, Asn-412, Asn-444, Asn-558, Asn-610, and Asn-624. The segment at 412–450 (NATASPTSTPTTSPRRRRRDTSSVSGGGNNGDNSTKEES) is disordered. Positions 673–725 (LDDSIDHGRDSFIQTLGDIMQDLGTIGKVVVNVASGVFSLFGSIVSGVISFFK) are hydrophobic membrane proximal region. The helical transmembrane segment at 728–748 (FGGMLLIVLIIAGVVVVYLFM) threads the bilayer. The Intravirion segment spans residues 749 to 874 (TRSRSIYSAP…VEAGTADTGV (126 aa)). The disordered stretch occupies residues 830 to 874 (RRGGGGYQRLQRDGSDDEGDYEPLRRQDGGYDDVDVEAGTADTGV). Positions 836–839 (YQRL) match the Internalization motif motif.

It belongs to the herpesviridae glycoprotein B family. As to quaternary structure, homotrimer; disulfide-linked. Binds to heparan sulfate proteoglycans. Interacts with gH/gL heterodimer. In terms of processing, a proteolytic cleavage by host furin generates two subunits that remain linked by disulfide bonds.

It localises to the virion membrane. The protein localises to the host cell membrane. It is found in the host endosome membrane. Its subcellular location is the host Golgi apparatus membrane. Functionally, envelope glycoprotein that forms spikes at the surface of virion envelope. Essential for the initial attachment to heparan sulfate moieties of the host cell surface proteoglycans. Involved in fusion of viral and cellular membranes leading to virus entry into the host cell. Following initial binding to its host receptors, membrane fusion is mediated by the fusion machinery composed at least of gB and the heterodimer gH/gL. May be involved in the fusion between the virion envelope and the outer nuclear membrane during virion egress. The sequence is that of Envelope glycoprotein B from Equus caballus (Horse).